The sequence spans 134 residues: Small ribosomal subunit protein uS8c (134 aa).

It belongs to the universal ribosomal protein uS8 family. Part of the 30S ribosomal subunit.

The protein localises to the plastid. The protein resides in the chloroplast. Its function is as follows. One of the primary rRNA binding proteins, it binds directly to 16S rRNA central domain where it helps coordinate assembly of the platform of the 30S subunit. The polypeptide is Small ribosomal subunit protein uS8c (rps8) (Bigelowiella natans (Pedinomonas minutissima)).